The sequence spans 259 residues: ATP synthase subunit a 1 (259 aa).

The next 5 helical transmembrane spans lie at 30 to 50, 90 to 110, 135 to 155, 209 to 229, and 230 to 250; these read TLHV…LFFF, LIAP…AMDL, DLNA…FYSL, LIFI…SFPW, and AVFH…LTIV.

It belongs to the ATPase A chain family. In terms of assembly, F-type ATPases have 2 components, CF(1) - the catalytic core - and CF(0) - the membrane proton channel. CF(1) has five subunits: alpha(3), beta(3), gamma(1), delta(1), epsilon(1). CF(0) has three main subunits: a(1), b(2) and c(9-12). The alpha and beta chains form an alternating ring which encloses part of the gamma chain. CF(1) is attached to CF(0) by a central stalk formed by the gamma and epsilon chains, while a peripheral stalk is formed by the delta and b chains.

The protein localises to the cell inner membrane. Functionally, key component of the proton channel; it plays a direct role in the translocation of protons across the membrane. The protein is ATP synthase subunit a 1 of Methylococcus capsulatus (strain ATCC 33009 / NCIMB 11132 / Bath).